A 158-amino-acid polypeptide reads, in one-letter code: Transcription elongation factor GreA (158 aa).

The stretch at 46-66 (AEYEAAKERQGFIEGRISELE) forms a coiled coil.

This sequence belongs to the GreA/GreB family.

Necessary for efficient RNA polymerase transcription elongation past template-encoded arresting sites. The arresting sites in DNA have the property of trapping a certain fraction of elongating RNA polymerases that pass through, resulting in locked ternary complexes. Cleavage of the nascent transcript by cleavage factors such as GreA or GreB allows the resumption of elongation from the new 3'terminus. GreA releases sequences of 2 to 3 nucleotides. This Neisseria meningitidis serogroup A / serotype 4A (strain DSM 15465 / Z2491) protein is Transcription elongation factor GreA.